Consider the following 320-residue polypeptide: Mitochondrial thiamine pyrophosphate carrier (320 aa).

Solcar repeat units lie at residues 13–106 (NTKF…LTEL), 116–202 (REFS…LKHL), and 214–309 (NENL…FCNV). The helical transmembrane segment at 19-39 (AVAGSVSGLVTRALISPFDVI) threads the bilayer. At Ser51 the chain carries Phosphoserine. 4 helical membrane passes run 87–107 (ILSI…TELV), 122–142 (FVCG…VDVL), 173–193 (VFYK…GLQF), and 220–240 (LLCG…LDLF). The Substrate recognition signature appears at 241 to 246 (KKRLQV). Residues 293–313 (ALSTGFMFFSYEFFCNVFHCM) form a helical membrane-spanning segment.

Belongs to the mitochondrial carrier (TC 2.A.29) family. As to expression, expressed in all tissues examined except for placenta. Highest levels in colon, kidney, lung, testis, spleen, and brain.

The protein localises to the mitochondrion membrane. It carries out the reaction thiamine phosphate(out) + thiamine diphosphate(in) = thiamine phosphate(in) + thiamine diphosphate(out). Its function is as follows. Mitochondrial transporter mediating uptake of thiamine diphosphate into mitochondria. It is not clear if the antiporter activity is affected by the membrane potential or by the proton electrochemical gradient. The protein is Mitochondrial thiamine pyrophosphate carrier of Homo sapiens (Human).